We begin with the raw amino-acid sequence, 737 residues long: 1,4-alpha-glucan branching enzyme GlgB (737 aa).

The active-site Nucleophile is the aspartate 419. The active-site Proton donor is glutamate 472.

The protein belongs to the glycosyl hydrolase 13 family. GlgB subfamily. Monomer.

It catalyses the reaction Transfers a segment of a (1-&gt;4)-alpha-D-glucan chain to a primary hydroxy group in a similar glucan chain.. It functions in the pathway glycan biosynthesis; glycogen biosynthesis. Functionally, catalyzes the formation of the alpha-1,6-glucosidic linkages in glycogen by scission of a 1,4-alpha-linked oligosaccharide from growing alpha-1,4-glucan chains and the subsequent attachment of the oligosaccharide to the alpha-1,6 position. The sequence is that of 1,4-alpha-glucan branching enzyme GlgB from Mesorhizobium japonicum (strain LMG 29417 / CECT 9101 / MAFF 303099) (Mesorhizobium loti (strain MAFF 303099)).